Reading from the N-terminus, the 203-residue chain is Probable deoxycytidylate deaminase (203 aa).

The CMP/dCMP-type deaminase domain maps to 27–163; it reads HWDDYFMATS…PTYRASKRML (137 aa). His-102 provides a ligand contact to Zn(2+). Glu-104 serves as the catalytic Proton donor. Residues Cys-128 and Cys-131 each coordinate Zn(2+).

This sequence belongs to the cytidine and deoxycytidylate deaminase family. The cofactor is Zn(2+).

The catalysed reaction is dCMP + H2O + H(+) = dUMP + NH4(+). In terms of biological role, supplies the nucleotide substrate for thymidylate synthetase. This chain is Probable deoxycytidylate deaminase, found in Drosophila melanogaster (Fruit fly).